Here is a 206-residue protein sequence, read N- to C-terminus: Triosephosphate isomerase (206 aa).

His-76 (electrophile) is an active-site residue. The active-site Proton acceptor is the Glu-146.

This sequence belongs to the triosephosphate isomerase family. Homodimer.

The catalysed reaction is D-glyceraldehyde 3-phosphate = dihydroxyacetone phosphate. It functions in the pathway carbohydrate biosynthesis; gluconeogenesis. The protein operates within carbohydrate degradation; glycolysis; D-glyceraldehyde 3-phosphate from glycerone phosphate: step 1/1. The polypeptide is Triosephosphate isomerase (Tpi) (Anopheles merus (Mosquito)).